We begin with the raw amino-acid sequence, 684 residues long: Sec1 family domain-containing protein 2 (684 aa).

Belongs to the STXBP/unc-18/SEC1 family.

May be involved in protein transport. In Homo sapiens (Human), this protein is Sec1 family domain-containing protein 2 (SCFD2).